Reading from the N-terminus, the 777-residue chain is Disintegrin and metalloproteinase domain-containing protein 5 (777 aa).

The N-terminal stretch at 1–16 is a signal peptide; sequence MFLVLVLLTGLGRLYA. The propeptide occupies 17–142; that stretch reads GNNPRKTFVQ…VLSGFTHMIY (126 aa). The Extracellular segment spans residues 17–706; that stretch reads GNNPRKTFVQ…RGYVVLSTKR (690 aa). Residues asparagine 49 and asparagine 123 are each glycosylated (N-linked (GlcNAc...) asparagine). The 198-residue stretch at 185–382 folds into the Peptidase M12B domain; that stretch reads RYIDMYIVVN…YGLTCLRNTS (198 aa). 4 cysteine pairs are disulfide-bonded: cysteine 294–cysteine 377, cysteine 336–cysteine 361, cysteine 338–cysteine 343, and cysteine 456–cysteine 477. Residues 396–485 enclose the Disintegrin domain; sequence RRICGNSIRE…DCVHDTYAQN (90 aa). An N-linked (GlcNAc...) asparagine glycan is attached at asparagine 566. The EGF-like domain maps to 633–667; that stretch reads NNGSCNAEIHCQGRGICNNLDNCHCHKGFVPPECA. 3 disulfides stabilise this stretch: cysteine 637/cysteine 649, cysteine 643/cysteine 655, and cysteine 657/cysteine 666. Residues 707 to 727 form a helical membrane-spanning segment; it reads FQLIFYIGIPVIIIVAAILIK. At 728 to 777 the chain is on the cytoplasmic side; it reads QNQLGKLFCRGEKEHMSSVSEDGSRSVTLSATESKFPADTEHSNKEEDAQ. Polar residues predominate over residues 744-760; the sequence is SSVSEDGSRSVTLSATE. Residues 744 to 777 form a disordered region; the sequence is SSVSEDGSRSVTLSATESKFPADTEHSNKEEDAQ. A compositionally biased stretch (basic and acidic residues) spans 763-777; it reads FPADTEHSNKEEDAQ.

As to quaternary structure, interacts with TEX101. In terms of processing, subject to proteolytic processing during epididymal transit of spermatozoa. As to expression, detected in testis.

It is found in the membrane. Functionally, this is a non catalytic metalloprotease-like protein. May play a role in sperm-egg fusion. This chain is Disintegrin and metalloproteinase domain-containing protein 5 (ADAM5), found in Cavia porcellus (Guinea pig).